We begin with the raw amino-acid sequence, 198 residues long: Probable GTP-binding protein EngB (198 aa).

The region spanning 22–195 (NIPEVALAGR…LEVIGRWVGL (174 aa)) is the EngB-type G domain. GTP is bound by residues 30-37 (GRSNVGKS), 57-61 (GRTRL), 75-78 (DLPG), 142-145 (TKAD), and 174-176 (FSA). Positions 37 and 59 each coordinate Mg(2+).

The protein belongs to the TRAFAC class TrmE-Era-EngA-EngB-Septin-like GTPase superfamily. EngB GTPase family. Mg(2+) serves as cofactor.

Functionally, necessary for normal cell division and for the maintenance of normal septation. In Pelotomaculum thermopropionicum (strain DSM 13744 / JCM 10971 / SI), this protein is Probable GTP-binding protein EngB.